Consider the following 227-residue polypeptide: ATP synthase F(0) complex subunit a (227 aa).

6 consecutive transmembrane segments (helical) span residues 12-32 (PCLLGIPLILPSLLLPALLLP), 69-89 (WALLLTSLILMLLSINLLGLL), 98-118 (QLSMNMALALPLWLATLLTGL), 139-159 (IPALIMIETTSLLIRPLALGV), 170-190 (LLIQLISTATIALLPMMPSIS), and 196-216 (ILFLLTILEVAVAMIQAYVFV).

Belongs to the ATPase A chain family. As to quaternary structure, component of the ATP synthase complex composed at least of ATP5F1A/subunit alpha, ATP5F1B/subunit beta, ATP5MC1/subunit c (homooctomer), MT-ATP6/subunit a, MT-ATP8/subunit 8, ATP5ME/subunit e, ATP5MF/subunit f, ATP5MG/subunit g, ATP5MK/subunit k, ATP5MJ/subunit j, ATP5F1C/subunit gamma, ATP5F1D/subunit delta, ATP5F1E/subunit epsilon, ATP5PF/subunit F6, ATP5PB/subunit b, ATP5PD/subunit d, ATP5PO/subunit OSCP. ATP synthase complex consists of a soluble F(1) head domain (subunits alpha(3) and beta(3)) - the catalytic core - and a membrane F(0) domain - the membrane proton channel (subunits c, a, 8, e, f, g, k and j). These two domains are linked by a central stalk (subunits gamma, delta, and epsilon) rotating inside the F1 region and a stationary peripheral stalk (subunits F6, b, d, and OSCP). Interacts with DNAJC30; interaction is direct.

It is found in the mitochondrion inner membrane. The enzyme catalyses H(+)(in) = H(+)(out). Subunit a, of the mitochondrial membrane ATP synthase complex (F(1)F(0) ATP synthase or Complex V) that produces ATP from ADP in the presence of a proton gradient across the membrane which is generated by electron transport complexes of the respiratory chain. ATP synthase complex consist of a soluble F(1) head domain - the catalytic core - and a membrane F(1) domain - the membrane proton channel. These two domains are linked by a central stalk rotating inside the F(1) region and a stationary peripheral stalk. During catalysis, ATP synthesis in the catalytic domain of F(1) is coupled via a rotary mechanism of the central stalk subunits to proton translocation. With the subunit c (ATP5MC1), forms the proton-conducting channel in the F(0) domain, that contains two crucial half-channels (inlet and outlet) that facilitate proton movement from the mitochondrial intermembrane space (IMS) into the matrix. Protons are taken up via the inlet half-channel and released through the outlet half-channel, following a Grotthuss mechanism. The chain is ATP synthase F(0) complex subunit a from Gallus gallus (Chicken).